The primary structure comprises 745 residues: DNA ligase (745 aa).

A disordered region spans residues 1–27 (MRNHGPGSERKDACVSAPDPTFSDDVP). NAD(+) contacts are provided by residues 57-61 (DAEYD), 106-107 (SL), and Glu-135. The N6-AMP-lysine intermediate role is filled by Lys-137. Residues Arg-158 and Glu-197 each contribute to the NAD(+) site. Residues 216–235 (GKPPFANPRNAAAGSLRQKD) are disordered. NAD(+) contacts are provided by Lys-313 and Lys-337. Residues Cys-431, Cys-434, Cys-450, and Cys-456 each coordinate Zn(2+). The BRCT domain maps to 649–738 (DGPRLLDGIT…PEAARAARLS (90 aa)).

It belongs to the NAD-dependent DNA ligase family. LigA subfamily. Mg(2+) serves as cofactor. The cofactor is Mn(2+).

It catalyses the reaction NAD(+) + (deoxyribonucleotide)n-3'-hydroxyl + 5'-phospho-(deoxyribonucleotide)m = (deoxyribonucleotide)n+m + AMP + beta-nicotinamide D-nucleotide.. Functionally, DNA ligase that catalyzes the formation of phosphodiester linkages between 5'-phosphoryl and 3'-hydroxyl groups in double-stranded DNA using NAD as a coenzyme and as the energy source for the reaction. It is essential for DNA replication and repair of damaged DNA. This is DNA ligase from Thermobifida fusca (strain YX).